A 541-amino-acid polypeptide reads, in one-letter code: Imidazole glycerol phosphate synthase hisHF (541 aa).

Residues 2–214 (IVSIVDYGSG…LTGNYEQPIS (213 aa)) form the Glutamine amidotransferase type-1 domain. Residues cysteine 80, histidine 189, and glutamate 191 each act as for GATase activity in the active site. The segment at 228-541 (LTKRIIACLD…LAIHDVLVRT (314 aa)) is cyclase. Residues aspartate 237 and aspartate 396 contribute to the active site.

This sequence in the C-terminal section; belongs to the HisA/HisF family.

It carries out the reaction 5-[(5-phospho-1-deoxy-D-ribulos-1-ylimino)methylamino]-1-(5-phospho-beta-D-ribosyl)imidazole-4-carboxamide + L-glutamine = D-erythro-1-(imidazol-4-yl)glycerol 3-phosphate + 5-amino-1-(5-phospho-beta-D-ribosyl)imidazole-4-carboxamide + L-glutamate + H(+). The enzyme catalyses L-glutamine + H2O = L-glutamate + NH4(+). The protein operates within amino-acid biosynthesis; L-histidine biosynthesis; L-histidine from 5-phospho-alpha-D-ribose 1-diphosphate: step 5/9. IGPS catalyzes the conversion of PRFAR and glutamine to IGP, AICAR and glutamate. The glutaminase domain produces the ammonia necessary for the cyclase domain to produce IGP and AICAR from PRFAR. The ammonia is channeled to the active site of the cyclase domain. This Schizosaccharomyces pombe (strain 972 / ATCC 24843) (Fission yeast) protein is Imidazole glycerol phosphate synthase hisHF (his4).